Consider the following 155-residue polypeptide: Small ribosomal subunit protein uS7c (155 aa).

Belongs to the universal ribosomal protein uS7 family. In terms of assembly, part of the 30S ribosomal subunit.

It is found in the plastid. The protein localises to the chloroplast. In terms of biological role, one of the primary rRNA binding proteins, it binds directly to 16S rRNA where it nucleates assembly of the head domain of the 30S subunit. The protein is Small ribosomal subunit protein uS7c (rps7) of Marchantia polymorpha (Common liverwort).